A 1280-amino-acid polypeptide reads, in one-letter code: Rho guanine nucleotide exchange factor 10-like protein (1280 aa).

Pro residues predominate over residues 1-10 (MASSNPPPQP). A disordered region spans residues 1–94 (MASSNPPPQP…TEAPTVVSNG (94 aa)). The segment covering 26–46 (EVEEDSGEAFEFDDSDEEEDT) has biased composition (acidic residues). Ser-40 carries the post-translational modification Phosphoserine. The segment covering 78–89 (PAAAPPQTEAPT) has biased composition (low complexity). Phosphotyrosine is present on residues Tyr-131 and Tyr-152. The segment at 161–202 (PRETEDLGWSSSEFESYSEDSGEETKPEAEPTKHRGSFQPKL) is disordered. The span at 183–193 (EETKPEAEPTK) shows a compositional bias: basic and acidic residues. Phosphoserine is present on Ser-279. A DH domain is found at 314-501 (VRRHILGSIV…ETLAEKLNEQ (188 aa)). 2 disordered regions span residues 1133 to 1163 (QEEA…HTAR) and 1186 to 1207 (PLLS…SEED).

As to quaternary structure, interacts with RHOA, RHOB and RHOC.

It is found in the cytoplasm. Its function is as follows. Acts as a guanine nucleotide exchange factor (GEF) for RHOA, RHOB and RHOC. The protein is Rho guanine nucleotide exchange factor 10-like protein (Arhgef10l) of Mus musculus (Mouse).